The primary structure comprises 280 residues: Formamidopyrimidine-DNA glycosylase (280 aa).

Proline 2 (schiff-base intermediate with DNA) is an active-site residue. Glutamate 3 functions as the Proton donor in the catalytic mechanism. Residue lysine 60 is the Proton donor; for beta-elimination activity of the active site. DNA is bound by residues histidine 93 and arginine 112. An FPG-type zinc finger spans residues 240-274; it reads YVYGQHSKPCRVCGADIIKIKVGGRGTHLCPTCQP. Residue arginine 264 is the Proton donor; for delta-elimination activity of the active site.

Belongs to the FPG family. In terms of assembly, monomer. Zn(2+) serves as cofactor.

The catalysed reaction is Hydrolysis of DNA containing ring-opened 7-methylguanine residues, releasing 2,6-diamino-4-hydroxy-5-(N-methyl)formamidopyrimidine.. It carries out the reaction 2'-deoxyribonucleotide-(2'-deoxyribose 5'-phosphate)-2'-deoxyribonucleotide-DNA = a 3'-end 2'-deoxyribonucleotide-(2,3-dehydro-2,3-deoxyribose 5'-phosphate)-DNA + a 5'-end 5'-phospho-2'-deoxyribonucleoside-DNA + H(+). Functionally, involved in base excision repair of DNA damaged by oxidation or by mutagenic agents. Acts as a DNA glycosylase that recognizes and removes damaged bases. Has a preference for oxidized purines, such as 7,8-dihydro-8-oxoguanine (8-oxoG). Has AP (apurinic/apyrimidinic) lyase activity and introduces nicks in the DNA strand. Cleaves the DNA backbone by beta-delta elimination to generate a single-strand break at the site of the removed base with both 3'- and 5'-phosphates. The chain is Formamidopyrimidine-DNA glycosylase from Oceanobacillus iheyensis (strain DSM 14371 / CIP 107618 / JCM 11309 / KCTC 3954 / HTE831).